A 568-amino-acid chain; its full sequence is Transport inhibitor response 1-like protein Os11g0515500 (568 aa).

The 45-residue stretch at 1–45 (MVFFPEEVVEHILGFLASHRDRNAVSLVCREWYRVERLSRRSVLV) folds into the F-box domain. Residues K69, 103–104 (KR), and R335 contribute to the 1D-myo-inositol hexakisphosphate site. The tract at residues 338 to 343 (PANANA) is interaction with auxin-responsive proteins. Residue 390–392 (SFR) participates in 1D-myo-inositol hexakisphosphate binding. The segment at 394–398 (CVLDP) is interaction with auxin-responsive proteins. R425 provides a ligand contact to 1D-myo-inositol hexakisphosphate. Positions 453–454 (AF) are interaction with auxin-responsive proteins. 1D-myo-inositol hexakisphosphate contacts are provided by residues 473 to 474 (KK) and R498.

As to quaternary structure, part of a SCF (SKP1-cullin-F-box) protein ligase complex. May interact with auxin and auxin-responsive proteins.

It is found in the nucleus. It functions in the pathway protein modification; protein ubiquitination. This Oryza sativa subsp. japonica (Rice) protein is Transport inhibitor response 1-like protein Os11g0515500.